Here is a 532-residue protein sequence, read N- to C-terminus: Probable bifunctional tRNA threonylcarbamoyladenosine biosynthesis protein (532 aa).

The interval 1–323 is kae1; it reads MRVLGVEGTA…FRPDEVSVTW (323 aa). 2 residues coordinate Fe cation: His107 and His111. Residues 128 to 132, Asp160, Gly173, Glu177, and Asn256 contribute to the L-threonylcarbamoyladenylate site; that span reads NASGA. Position 284 (Asp284) interacts with Fe cation. The Protein kinase domain occupies 329-532; the sequence is PARDPGADAV…GRYQDDPETA (204 aa). ATP is bound by residues 338–346 and Lys355; that span reads VRQGAEATV. Catalysis depends on Asp444, which acts as the Proton acceptor; for kinase activity.

This sequence in the N-terminal section; belongs to the KAE1 / TsaD family. It in the C-terminal section; belongs to the protein kinase superfamily. Tyr protein kinase family. BUD32 subfamily. In terms of assembly, component of the KEOPS complex that consists of Kae1, Bud32, Cgi121 and Pcc1; the whole complex dimerizes. It depends on Fe(2+) as a cofactor.

It localises to the cytoplasm. It carries out the reaction L-seryl-[protein] + ATP = O-phospho-L-seryl-[protein] + ADP + H(+). The catalysed reaction is L-threonyl-[protein] + ATP = O-phospho-L-threonyl-[protein] + ADP + H(+). The enzyme catalyses L-threonylcarbamoyladenylate + adenosine(37) in tRNA = N(6)-L-threonylcarbamoyladenosine(37) in tRNA + AMP + H(+). Required for the formation of a threonylcarbamoyl group on adenosine at position 37 (t(6)A37) in tRNAs that read codons beginning with adenine. Is a component of the KEOPS complex that is probably involved in the transfer of the threonylcarbamoyl moiety of threonylcarbamoyl-AMP (TC-AMP) to the N6 group of A37. The Kae1 domain likely plays a direct catalytic role in this reaction. The Bud32 domain probably displays kinase activity that regulates Kae1 function. The polypeptide is Probable bifunctional tRNA threonylcarbamoyladenosine biosynthesis protein (Halobacterium salinarum (strain ATCC 700922 / JCM 11081 / NRC-1) (Halobacterium halobium)).